The sequence spans 549 residues: DNA 3'-5' helicase XPB (549 aa).

The interval 1–130 is required for protein stability or solubility; that stretch reads MTDGPLIVQS…RNKKIAPMLG (130 aa). The region spanning 190–344 is the Helicase ATP-binding domain; that stretch reads ADSFWAGGSG…DVFSLIGPKR (155 aa). Residue 203–210 participates in ATP binding; sequence LPCGAGKT. Residues 298–301 carry the DEAH box motif; it reads DEVH. Positions 399–545 constitute a Helicase C-terminal domain; sequence VVKSILAKHP…YIIRDADDLL (147 aa).

This sequence belongs to the helicase family. RAD25/XPB subfamily. In terms of assembly, monomer. Mn(2+) serves as cofactor. Requires Mg(2+) as cofactor.

The catalysed reaction is Couples ATP hydrolysis with the unwinding of duplex DNA by translocating in the 3'-5' direction.. It catalyses the reaction ATP + H2O = ADP + phosphate + H(+). In terms of biological role, ATP-dependent 3'-5' DNA helicase, unwinds 3'-overhangs, 3'- flaps, and splayed-arm DNA substrates but not 5'-overhangs, 5'-flap substrates, 3-way junctions or Holliday junctions. Not highly efficient in vitro. Requires ATP hydrolysis for helicase activity; the ATPase activity is DNA-dependent and requires a minimum of 4 single-stranded nucleotides (nt) with 6-10 nt providing all necessary interactions for full processive unwinding. The ATPase prefers ATP over CTP or GTP, is almost inactive with TTP. DNA helicase activity requires ATP or dATP and only acts when the 3'-overhang is &gt;20 nt. Capable of unwinding a DNA:RNA hybrid if the 3'-overhang is DNA. Also catalyzes ATP-independent annealing of complementary DNA strands; annealing requires Mg(2+). The polypeptide is DNA 3'-5' helicase XPB (Mycobacterium tuberculosis (strain ATCC 25618 / H37Rv)).